We begin with the raw amino-acid sequence, 213 residues long: Orotate phosphoribosyltransferase (213 aa).

Lysine 26 contributes to the 5-phospho-alpha-D-ribose 1-diphosphate binding site. 34–35 (FF) contacts orotate. 5-phospho-alpha-D-ribose 1-diphosphate-binding positions include 72 to 73 (YK), arginine 99, lysine 100, lysine 103, histidine 105, and 124 to 132 (DDVITAGTA). Residues threonine 128 and arginine 156 each coordinate orotate.

It belongs to the purine/pyrimidine phosphoribosyltransferase family. PyrE subfamily. In terms of assembly, homodimer. It depends on Mg(2+) as a cofactor.

It carries out the reaction orotidine 5'-phosphate + diphosphate = orotate + 5-phospho-alpha-D-ribose 1-diphosphate. It functions in the pathway pyrimidine metabolism; UMP biosynthesis via de novo pathway; UMP from orotate: step 1/2. Functionally, catalyzes the transfer of a ribosyl phosphate group from 5-phosphoribose 1-diphosphate to orotate, leading to the formation of orotidine monophosphate (OMP). In Escherichia coli O157:H7, this protein is Orotate phosphoribosyltransferase.